The following is a 492-amino-acid chain: Citrate synthase, peroxisomal (492 aa).

Active-site residues include His307, His346, and Asp402. The disordered stretch occupies residues 469–492 (PAKVRSQDSYSSATTKRYSKVTSH). Over residues 475 to 484 (QDSYSSATTK) the composition is skewed to polar residues.

Belongs to the citrate synthase family.

The protein localises to the peroxisome. It carries out the reaction oxaloacetate + acetyl-CoA + H2O = citrate + CoA + H(+). It functions in the pathway carbohydrate metabolism; tricarboxylic acid cycle; isocitrate from oxaloacetate: step 1/2. Peroxisomal protein involved in the cellular biosynthesis of citrate, and required primarily for cell growth and modulation of multicellular development. This is Citrate synthase, peroxisomal (cshA) from Dictyostelium discoideum (Social amoeba).